The following is a 569-amino-acid chain: Interleukin-1 receptor type 1 (569 aa).

The N-terminal stretch at 1-17 (MKVLLRLICFIALLISS) is a signal peptide. The Extracellular segment spans residues 18 to 336 (LEADKCKERE…LIYPVTNFQK (319 aa)). Intrachain disulfides connect Cys23/Cys104, Cys44/Cys96, Cys121/Cys164, and Cys142/Cys196. Ig-like C2-type domains lie at 23-110 (CKER…IKIS), 118-210 (PNLC…YPIT), and 226-328 (PVIV…IQLI). An N-linked (GlcNAc...) asparagine glycan is attached at Asn100. N-linked (GlcNAc...) asparagine glycans are attached at residues Asn193, Asn233, Asn249, Asn263, and Asn297. An intrachain disulfide couples Cys248 to Cys312. The helical transmembrane segment at 337–356 (HMIGICVTLTVIIVCSVFIY) threads the bilayer. Topologically, residues 357–569 (KIFKIDIVLW…LQREAHVPLG (213 aa)) are cytoplasmic. Residues 383 to 538 (KTYDAYILYP…RFWKNVRYHM (156 aa)) form the TIR domain. The active site involves Glu470. At Tyr496 the chain carries Phosphotyrosine. The interval 540–569 (VQRRSPSSKHQLLSPATKEKLQREAHVPLG) is disordered. Positions 556–569 (TKEKLQREAHVPLG) are enriched in basic and acidic residues.

The protein belongs to the interleukin-1 receptor family. The interleukin-1 receptor complex is a heterodimer of IL1R1 and IL1RAP. Interacts with PIK3R1. Interacts with IL1A. Post-translationally, a soluble form (sIL1R1) is probably produced by proteolytic cleavage at the cell surface (shedding). Rapidly phosphorylated on Tyr-496 in response to IL-1, which creates a SH2 binding site for the PI 3-kinase regulatory subunit PIK3R1. In terms of tissue distribution, expressed in T-helper cell subsets. Preferentially expressed in T-helper 1 (Th1) cells.

The protein resides in the membrane. Its subcellular location is the cell membrane. The protein localises to the secreted. The enzyme catalyses NAD(+) + H2O = ADP-D-ribose + nicotinamide + H(+). Functionally, receptor for IL1A, IL1B and IL1RN. After binding to interleukin-1 associates with the coreceptor IL1RAP to form the high affinity interleukin-1 receptor complex which mediates interleukin-1-dependent activation of NF-kappa-B, MAPK and other pathways. Signaling involves the recruitment of adapter molecules such as TOLLIP, MYD88, and IRAK1 or IRAK2 via the respective TIR domains of the receptor/coreceptor subunits. Binds ligands with comparable affinity and binding of antagonist IL1RN prevents association with IL1RAP to form a signaling complex. Involved in IL1B-mediated costimulation of IFNG production from T-helper 1 (Th1) cells. This Homo sapiens (Human) protein is Interleukin-1 receptor type 1 (IL1R1).